A 160-amino-acid polypeptide reads, in one-letter code: RNA pyrophosphohydrolase (160 aa).

The region spanning 10–154 is the Nudix hydrolase domain; it reads PYRKCVGVVL…KRDVYEQVFD (145 aa). A Nudix box motif is present at residues 44–65; it reads GGIEDGEDARTAALRELVEETG.

This sequence belongs to the Nudix hydrolase family. RppH subfamily. Requires a divalent metal cation as cofactor.

Functionally, accelerates the degradation of transcripts by removing pyrophosphate from the 5'-end of triphosphorylated RNA, leading to a more labile monophosphorylated state that can stimulate subsequent ribonuclease cleavage. The polypeptide is RNA pyrophosphohydrolase (Dinoroseobacter shibae (strain DSM 16493 / NCIMB 14021 / DFL 12)).